We begin with the raw amino-acid sequence, 298 residues long: Triosephosphate isomerase, chloroplastic (298 aa).

The segment covering 1 to 18 has biased composition (pro residues); that stretch reads MAARRPSPPPASPPPPRP. The disordered stretch occupies residues 1-32; the sequence is MAARRPSPPPASPPPPRPRSTTTTRTTSSASA. The N-terminal 43 residues, 1–43, are a transit peptide targeting the chloroplast; sequence MAARRPSPPPASPPPPRPRSTTTTRTTSSASAAPAAAQRLVAM. Positions 19-32 are enriched in low complexity; that stretch reads RSTTTTRTTSSASA. Asn54 and Lys56 together coordinate substrate. His138 (electrophile) is an active-site residue. Residue Cys186 is modified to Cysteine derivative. Glu208 serves as the catalytic Proton acceptor.

This sequence belongs to the triosephosphate isomerase family. Homodimer.

It is found in the plastid. The protein resides in the chloroplast. The enzyme catalyses D-glyceraldehyde 3-phosphate = dihydroxyacetone phosphate. Its pathway is carbohydrate biosynthesis; Calvin cycle. The sequence is that of Triosephosphate isomerase, chloroplastic from Secale cereale (Rye).